The sequence spans 1050 residues: Diacylglycerol kinase iota (1050 aa).

Disordered stretches follow at residues 52–73 (NPSS…SGSG) and 325–356 (PQNS…ENKG). Residues 332 to 347 (SNRKKKRTSFKRKASK) are compositionally biased toward basic residues. In terms of domain architecture, DAGKc spans 367-502 (PLMKPLLVFV…DRWNLHVERN (136 aa)). ANK repeat units lie at residues 943–972 (GHCS…AELL) and 979–1008 (TGET…SLRQ). The PDZ-binding motif lies at 1048–1050 (TAV).

Belongs to the eukaryotic diacylglycerol kinase family. As to quaternary structure, interacts (via PDZ-binding motif) with DLG4; controls the localization of DGKI to the synapse. Interacts (via PDZ-binding motif) with DLG1. Interacts (via PDZ-binding motif) with DLG2. Interacts (via PDZ-binding motif) with DLG3. May interact with RASGRP3; involved in the regulation of RASGRP3 activity. In terms of tissue distribution, specifically expressed in brain (at protein level). Expressed in hippocampus, cerebellum, brain stem and spinal cord (at protein level). Highly expressed in hippocampus, cerebellar cortex, olfactory bulb, and olfactory tubercle and to lower extent in the cerebral cortex, caudate putamen, and thalamus. Not detected in the white matter. Also expressed in eye. Major isoform in brain (at protein level). As to expression, minor isoform in brain (at protein level). In terms of tissue distribution, expressed in brain (at protein level).

It localises to the cell projection. The protein localises to the axon. The protein resides in the dendrite. Its subcellular location is the presynapse. It is found in the postsynapse. It localises to the postsynaptic density. The protein localises to the synaptic cell membrane. The protein resides in the cytoplasmic vesicle. Its subcellular location is the secretory vesicle. It is found in the synaptic vesicle membrane. It localises to the cytoplasm. The protein localises to the cytosol. The protein resides in the nucleus. The enzyme catalyses a 1,2-diacyl-sn-glycerol + ATP = a 1,2-diacyl-sn-glycero-3-phosphate + ADP + H(+). The catalysed reaction is 1,2-di-(9Z-octadecenoyl)-sn-glycerol + ATP = 1,2-di-(9Z-octadecenoyl)-sn-glycero-3-phosphate + ADP + H(+). It carries out the reaction 1-octadecanoyl-2-(9Z,12Z)-octadecadienoyl-sn-glycerol + ATP = 1-octadecanoyl-2-(9Z,12Z-octadecadienoyl)-sn-glycero-3-phosphate + ADP + H(+). It catalyses the reaction 1-octadecanoyl-2-(5Z,8Z,11Z,14Z-eicosatetraenoyl)-sn-glycerol + ATP = 1-octadecanoyl-2-(5Z,8Z,11Z,14Z-eicosatetraenoyl)-sn-glycero-3-phosphate + ADP + H(+). It participates in lipid metabolism; glycerolipid metabolism. Activated by phosphatidylserine. In terms of biological role, diacylglycerol kinase that converts diacylglycerol/DAG into phosphatidic acid/phosphatidate/PA and regulates the respective levels of these two bioactive lipids. Thereby, acts as a central switch between the signaling pathways activated by these second messengers with different cellular targets and opposite effects in numerous biological processes. Has probably no preference for any of the diacylglycerols in terms of the acyl chain composition, especially for the acyl chain at the sn-2 position. By controlling the diacylglycerol/DAG-mediated activation of RASGRP3, negatively regulates the Rap1 signaling pathway. May play a role in presynaptic diacylglycerol/DAG signaling and control neurotransmitter release during metabotropic glutamate receptor-dependent long-term depression. Functionally, has a decreased affinity for ATP and a reduced diacylglycerol kinase activity. Has no preference for any of the diacylglycerols in terms of the acyl chain composition. Its function is as follows. Has no diacylglycerol kinase activity. This is Diacylglycerol kinase iota from Rattus norvegicus (Rat).